The following is a 98-amino-acid chain: MPSISININLAFAAALLGMLMFRSHMMSSLLCLEGMMLSMFTLSTLTILNMQFTMSFTMPILLLVFAACEAAIGLALLVMVSNNYGLDYIQNLNLLQC.

3 consecutive transmembrane segments (helical) span residues 2-22 (PSISININLAFAAALLGMLMF), 29-49 (SLLCLEGMMLSMFTLSTLTIL), and 61-81 (ILLLVFAACEAAIGLALLVMV).

This sequence belongs to the complex I subunit 4L family. As to quaternary structure, core subunit of respiratory chain NADH dehydrogenase (Complex I) which is composed of 45 different subunits.

Its subcellular location is the mitochondrion inner membrane. The catalysed reaction is a ubiquinone + NADH + 5 H(+)(in) = a ubiquinol + NAD(+) + 4 H(+)(out). In terms of biological role, core subunit of the mitochondrial membrane respiratory chain NADH dehydrogenase (Complex I) which catalyzes electron transfer from NADH through the respiratory chain, using ubiquinone as an electron acceptor. Part of the enzyme membrane arm which is embedded in the lipid bilayer and involved in proton translocation. The protein is NADH-ubiquinone oxidoreductase chain 4L (MT-ND4L) of Microcebus mittermeieri (Mittermeier's mouse lemur).